An 845-amino-acid chain; its full sequence is Meiotically up-regulated gene 4 protein (845 aa).

A disordered region spans residues 122 to 158 (LSTTDEQPKEPSIISISSSSSDPSSSPPPSSSLLKTP). Over residues 132-145 (PSIISISSSSSDPS) the composition is skewed to low complexity. Residues 726–746 (FLVFLTFTGMTLFILYQLTFP) form a helical membrane-spanning segment.

It is found in the membrane. In terms of biological role, has a role in meiosis. The protein is Meiotically up-regulated gene 4 protein (mug4) of Schizosaccharomyces pombe (strain 972 / ATCC 24843) (Fission yeast).